The sequence spans 264 residues: tRNA pseudouridine synthase A (264 aa).

Asp-51 acts as the Nucleophile in catalysis. Tyr-109 serves as a coordination point for substrate.

This sequence belongs to the tRNA pseudouridine synthase TruA family. In terms of assembly, homodimer.

It carries out the reaction uridine(38/39/40) in tRNA = pseudouridine(38/39/40) in tRNA. Its function is as follows. Formation of pseudouridine at positions 38, 39 and 40 in the anticodon stem and loop of transfer RNAs. The polypeptide is tRNA pseudouridine synthase A (Aromatoleum aromaticum (strain DSM 19018 / LMG 30748 / EbN1) (Azoarcus sp. (strain EbN1))).